The primary structure comprises 557 residues: Formate--tetrahydrofolate ligase 2 (557 aa).

66–73 (TPAGEGKT) contacts ATP.

It belongs to the formate--tetrahydrofolate ligase family.

It catalyses the reaction (6S)-5,6,7,8-tetrahydrofolate + formate + ATP = (6R)-10-formyltetrahydrofolate + ADP + phosphate. It participates in one-carbon metabolism; tetrahydrofolate interconversion. The sequence is that of Formate--tetrahydrofolate ligase 2 from Streptococcus pyogenes serotype M5 (strain Manfredo).